The chain runs to 398 residues: Stimulator of interferon genes protein (398 aa).

The Cytoplasmic portion of the chain corresponds to 1–16; the sequence is MSVMGEDALVPRARSR. Residues 17 to 37 form a helical membrane-spanning segment; the sequence is LPVMCAAGLGFLTLAVAWLLD. The Lumenal segment spans residues 38–44; sequence SDKFSER. The helical transmembrane segment at 45–65 threads the bilayer; that stretch reads AGIIAFGLMLERFIYCICLLA. Residues 66-91 are Cytoplasmic-facing; the sequence is EELLFHSRQRYHGRMSEIFRACFRGS. A helical membrane pass occupies residues 92-112; that stretch reads GILGMCAIFLMLMLGGVSFSV. Residues 113–120 lie on the Lumenal side of the membrane; it reads KQWSHFNL. Residues 121–141 traverse the membrane as a helical segment; that stretch reads MCAGYMLLNSLGVLGPAPVEI. Topologically, residues 142–398 are cytoplasmic; it reads SEICEAKKMN…FNPSSAMKQN (257 aa). The tract at residues 150 to 331 is cyclic dinucleotide-binding domain (CBD); sequence MNVAHGLAWS…QNLKQQDGEI (182 aa). 2',3'-cGAMP-binding residues include Ser-159, Tyr-164, Arg-230, and Thr-254. Residues Ser-159, Tyr-164, 230-233, and Thr-254 each bind 3',3'-c-di-GMP; that span reads RSYT. The disordered stretch occupies residues 375 to 398; that stretch reads PQSLRSEPVETTDYFNPSSAMKQN. A compositionally biased stretch (polar residues) spans 387-398; that stretch reads DYFNPSSAMKQN.

It belongs to the STING family. Homodimer; forms a homodimer in absence of cyclic nucleotide (c-di-GMP or cGAMP). Homotetramer; in presence of cyclic nucleotide (c-di-GMP or cGAMP), forms tetramers and higher-order oligomers through side-by-side packing. Interacts (when phosphorylated) with irf3; following activation and phosphorylation by tbk1, recruits irf3. In terms of processing, phosphorylation by TBK1 leads to activation and production of IFN-beta. Following cyclic nucleotide (c-di-GMP or cGAMP)-binding, activation and translocation from the endoplasmic reticulum, STING1 is phosphorylated by tbk1, leading to recruitment of the transcription factor irf3 to induce type-I interferons and other cytokines.

Its subcellular location is the endoplasmic reticulum membrane. It localises to the cytoplasm. The protein localises to the perinuclear region. It is found in the endoplasmic reticulum-Golgi intermediate compartment membrane. The protein resides in the golgi apparatus membrane. Its subcellular location is the cytoplasmic vesicle. It localises to the autophagosome membrane. It carries out the reaction H(+)(in) = H(+)(out). Functionally, facilitator of innate immune signaling that acts as a sensor of cytosolic DNA from bacteria and viruses and promotes the production of type I interferon (IFN-alpha and IFN-beta). Innate immune response is triggered in response to non-CpG double-stranded DNA from viruses and bacteria delivered to the cytoplasm. Acts by binding cyclic dinucleotides: recognizes and binds cyclic di-GMP (c-di-GMP), a second messenger produced by bacteria, and cyclic GMP-AMP (cGAMP), a messenger produced by CGAS in response to DNA virus in the cytosol. Upon binding of c-di-GMP or cGAMP, STING1 oligomerizes and is able to activate both NF-kappa-B and irf3 transcription pathways to induce expression of type I interferon and exert a potent anti-viral state. Exhibits 2',3' phosphodiester linkage-specific ligand recognition: can bind both 2'-3' linked cGAMP and 3'-3' linked cGAMP but is preferentially activated by 2'-3' linked cGAMP. In addition to promote the production of type I interferons, plays a direct role in autophagy. Following cGAMP-binding, STING1 buds from the endoplasmic reticulum into COPII vesicles, which then form the endoplasmic reticulum-Golgi intermediate compartment (ERGIC). The ERGIC serves as the membrane source for LC3 lipidation, leading to formation of autophagosomes that target cytosolic DNA or DNA viruses for degradation by the lysosome. Promotes autophagy by acting as a proton channel that directs proton efflux from the Golgi to facilitate LC3 lipidation. The autophagy- and interferon-inducing activities can be uncoupled and autophagy induction is independent of TBK1 phosphorylation. This chain is Stimulator of interferon genes protein, found in Danio rerio (Zebrafish).